Here is a 219-residue protein sequence, read N- to C-terminus: Carboxypeptidase Y inhibitor (219 aa).

Met-1 bears the N-acetylmethionine mark.

It belongs to the phosphatidylethanolamine-binding protein family. Monomer.

The protein resides in the cytoplasm. In terms of biological role, specific and potent inhibitor of carboxypeptidase Y. The polypeptide is Carboxypeptidase Y inhibitor (TFS1) (Saccharomyces cerevisiae (strain ATCC 204508 / S288c) (Baker's yeast)).